The following is a 915-amino-acid chain: Metabotropic glutamate receptor 7 (915 aa).

Positions 1–34 (MVQLRKLLRVLTLMKFPCCVLEVLLCALAAAARG) are cleaved as a signal peptide. At 35-590 (QEMYAPHSIR…IIKLEWHSPW (556 aa)) the chain is on the extracellular side. Residues C67 and C109 are joined by a disulfide bond. N98 is a glycosylation site (N-linked (GlcNAc...) asparagine). Residues S159, 180 to 182 (AST), Y230, and D314 each bind L-glutamate. 7 disulfide bridges follow: C249–C541, C374–C390, C430–C437, C523–C542, C527–C545, C548–C560, and C563–C576. K407 contributes to the L-glutamate binding site. N458 and N486 each carry an N-linked (GlcNAc...) asparagine glycan. N-linked (GlcNAc...) asparagine glycosylation is present at N572. Residues 591-615 (AVIPVFLAMLGIIATIFVMATFIRY) form a helical membrane-spanning segment. Over 616 to 627 (NDTPIVRASGRE) the chain is Cytoplasmic. A helical membrane pass occupies residues 628–648 (LSYVLLTGIFLCYIITFLMIA). Over 649–654 (KPDVAV) the chain is Extracellular. Residues 655–675 (CSFRRVFLGLGMCISYAALLT) form a helical membrane-spanning segment. At 676–702 (KTNRIYRIFEQGKKSVTAPRLISPTSQ) the chain is on the cytoplasmic side. The helical transmembrane segment at 703 to 723 (LAITSSLISVQLLGVFIWFGV) threads the bilayer. At 724 to 753 (DPPNIIIDYDEHKTMNPEQARGVLKCDITD) the chain is on the extracellular side. A helical transmembrane segment spans residues 754–775 (LQIICSLGYSILLMVTCTVYAI). At 776 to 788 (KTRGVPENFNEAK) the chain is on the cytoplasmic side. Residues 789 to 810 (PIGFTMYTTCIVWLAFIPIFFG) traverse the membrane as a helical segment. Topologically, residues 811-825 (TAQSAEKLYIQTTTL) are extracellular. The helical transmembrane segment at 826–850 (TISMNLSASVALGMLYMPKVYIIIF) threads the bilayer. Topologically, residues 851 to 915 (HPELNVQKRK…KYVSYNNLVI (65 aa)) are cytoplasmic. Residues 874–895 (SRLSHKPSDRPNGEAKTELCEN) form a disordered region. The span at 879–892 (KPSDRPNGEAKTEL) shows a compositional bias: basic and acidic residues. S900 bears the Phosphoserine mark.

It belongs to the G-protein coupled receptor 3 family. As to quaternary structure, homodimer. Interacts with PICK1. N-glycosylated. In terms of tissue distribution, expressed in many areas of the brain, especially in the cerebral cortex, hippocampus, and cerebellum. Expression of GRM7 isoforms in non-neuronal tissues appears to be restricted to isoform 3 and isoform 4.

The protein resides in the cell membrane. Its function is as follows. G-protein coupled receptor activated by glutamate that regulates axon outgrowth through the MAPK-cAMP-PKA signaling pathway during neuronal development. Ligand binding causes a conformation change that triggers signaling via guanine nucleotide-binding proteins (G proteins) and modulates the activity of downstream effectors, such as adenylate cyclase that it inhibits. The protein is Metabotropic glutamate receptor 7 (GRM7) of Homo sapiens (Human).